Reading from the N-terminus, the 206-residue chain is Heterochromatin protein 1 (206 aa).

Disordered regions lie at residues 1-24 (MGKKIDNPESSAKVSDAEEEEEEY) and 47-145 (GYPE…GFDR). Residues Ser-11 and Ser-15 each carry the phosphoserine modification. Residues 24–82 (YAVEKIIDRRVRKGKVEYYLKWKGYPETENTWEPENNLDCQDLIQQYEASRKDEEKSAA) form the Chromo 1 domain. The span at 50–60 (ETENTWEPENN) shows a compositional bias: low complexity. The segment covering 72-98 (ASRKDEEKSAASKKDRPSSSAKAKETQ) has biased composition (basic and acidic residues). Positions 95–206 (KETQGRASSS…RLSWYSDNED (112 aa)) are binds to Su(var)39. A phosphoserine mark is found at Ser-102, Ser-103, and Ser-113. Phosphothreonine occurs at positions 127, 128, and 134. Positions 147–205 (LEAEKILGASDNNGRLTFLIQFKGVDQAEMVPSSVANEKIPRMVIHFYEERLSWYSDNE) constitute a Chromo 2 domain.

In terms of assembly, homodimer. Probably associates with Su(var)3-9. Interacts with Mcm10. Interacts (via chromoshadow domain) with piwi (via N-terminal region). Interacts with Rrp6. Associates with and may be part of the HipHop-HOAP telomere capping complex but is not required for its stability or telomere localization. Interacts (via the chromo domain 2 (chromoshadow domain) and the hinge region between chromo domains 1 and 2) with cav/HOAP (via C-terminus); the interaction is direct. Each molecule of cav/HOAP interacts with 2 molecules of Su(var)205/HP1. Interacts with HipHop (via N-terminus). Interacts with moi/modigliani; the interaction is direct. Interacts (via chromo domain 1) with His3/histone 3 (via N-terminal tail methylated at 'Lys-10'); the interaction is direct. In terms of tissue distribution, salivary gland (at protein level).

It localises to the nucleus. The protein resides in the nucleoplasm. It is found in the chromosome. Its subcellular location is the telomere. Structural component of heterochromatin, involved in gene repression and the modification of position-effect-variegation. Recognizes and binds histone H3 tails methylated at 'Lys-9', leading to epigenetic repression. Stabilizes chromatin-associated RNAs probably by binding to them and thereby preventing their degradation. Associates with, and may be a part of, the HipHop-HOAP complex that recruits the MTV complex to form the terminin telomere-capping complex, which binds to chromosome ends in a sequence-independent manner and prevents telomere fusion. Telomere capping is independent of the origin recognition complex (ORC). The sequence is that of Heterochromatin protein 1 from Drosophila melanogaster (Fruit fly).